We begin with the raw amino-acid sequence, 83 residues long: Cytochrome b559 subunit alpha (83 aa).

Residues 21–35 (VIHSITIPSLFIAGW) form a helical membrane-spanning segment. His23 contributes to the heme binding site.

Belongs to the PsbE/PsbF family. In terms of assembly, heterodimer of an alpha subunit and a beta subunit. PSII is composed of 1 copy each of membrane proteins PsbA, PsbB, PsbC, PsbD, PsbE, PsbF, PsbH, PsbI, PsbJ, PsbK, PsbL, PsbM, PsbT, PsbX, PsbY, PsbZ, Psb30/Ycf12, at least 3 peripheral proteins of the oxygen-evolving complex and a large number of cofactors. It forms dimeric complexes. Heme b serves as cofactor.

Its subcellular location is the plastid. The protein resides in the chloroplast thylakoid membrane. This b-type cytochrome is tightly associated with the reaction center of photosystem II (PSII). PSII is a light-driven water:plastoquinone oxidoreductase that uses light energy to abstract electrons from H(2)O, generating O(2) and a proton gradient subsequently used for ATP formation. It consists of a core antenna complex that captures photons, and an electron transfer chain that converts photonic excitation into a charge separation. The chain is Cytochrome b559 subunit alpha from Psilotum nudum (Whisk fern).